The chain runs to 365 residues: Cytochrome P450 71A3 (365 aa).

It belongs to the cytochrome P450 family. Heme serves as cofactor.

In terms of biological role, may have a role in maturation, such as during flavor formation or other metabolite production specific to aging tissues. The sequence is that of Cytochrome P450 71A3 (CYP71A3) from Solanum melongena (Eggplant).